Consider the following 340-residue polypeptide: Sodium/bile acid cotransporter 7 (340 aa).

At Met1–Glu10 the chain is on the cytoplasmic side. The helical transmembrane segment at Trp11–Val31 threads the bilayer. Topologically, residues Asn32–Lys37 are extracellular. Residues Pro38–Leu58 traverse the membrane as a helical segment. At Lys59–Arg71 the chain is on the cytoplasmic side. The chain crosses the membrane as a helical span at residues Leu72–Leu92. Residues Gln93–Pro116 lie on the Extracellular side of the membrane. The chain crosses the membrane as a helical span at residues Pro117–Phe137. Asn138 is a topological domain (cytoplasmic). The chain crosses the membrane as a helical span at residues Ser139–Gly159. At Ser160–Ser163 the chain is on the extracellular side. Residues Val164–Gly184 form a helical membrane-spanning segment. Residues Gln185–Pro201 are Cytoplasmic-facing. Residues Phe202–Phe222 form a helical membrane-spanning segment. Residues Ser223 to Leu234 lie on the Extracellular side of the membrane. A helical membrane pass occupies residues Ile235–Phe255. The Cytoplasmic portion of the chain corresponds to Ser256–Ala270. A helical membrane pass occupies residues Ile271–Phe291. Residues Ala292–Ser298 are Extracellular-facing. Residues Leu299–Val319 form a helical membrane-spanning segment. Over Pro320–Val340 the chain is Cytoplasmic.

It belongs to the bile acid:sodium symporter (BASS) (TC 2.A.28) family. Expressed in heart, brain, colon, lung, liver, adrenal gland, stomach and ovary. Also expressed weakly in small intestine. Expressed in skeletal tissues.

It localises to the cell membrane. It is found in the endoplasmic reticulum membrane. The protein localises to the golgi apparatus membrane. In terms of biological role, involved in teeth and skeletal development. Has an essential role in the biosynthesis and trafficking of glycosaminoglycans and glycoproteins to produce a proper functioning extracellular matrix. Required for extracellular matrix mineralization. Also involved in the regulation of cellular calcium homeostasis. Does not show transport activity towards bile acids or steroid sulfates (including taurocholate, cholate, chenodeoxycholate, estrone-3-sulfate, dehydroepiandrosterone sulfate (DHEAS) and pregnenolone sulfate). In Mus musculus (Mouse), this protein is Sodium/bile acid cotransporter 7 (Slc10a7).